We begin with the raw amino-acid sequence, 490 residues long: ATP synthase subunit beta, chloroplastic (490 aa).

170–177 (GGAGVGKT) contacts ATP.

It belongs to the ATPase alpha/beta chains family. In terms of assembly, F-type ATPases have 2 components, CF(1) - the catalytic core - and CF(0) - the membrane proton channel. CF(1) has five subunits: alpha(3), beta(3), gamma(1), delta(1), epsilon(1). CF(0) has four main subunits: a(1), b(1), b'(1) and c(9-12).

The protein localises to the plastid. Its subcellular location is the chloroplast thylakoid membrane. The enzyme catalyses ATP + H2O + 4 H(+)(in) = ADP + phosphate + 5 H(+)(out). Functionally, produces ATP from ADP in the presence of a proton gradient across the membrane. The catalytic sites are hosted primarily by the beta subunits. This chain is ATP synthase subunit beta, chloroplastic, found in Cressa truxillensis (Spreading alkaliweed).